The primary structure comprises 189 residues: Large ribosomal subunit protein bL9 (189 aa).

This sequence belongs to the bacterial ribosomal protein bL9 family.

Its function is as follows. Binds to the 23S rRNA. The protein is Large ribosomal subunit protein bL9 of Beijerinckia indica subsp. indica (strain ATCC 9039 / DSM 1715 / NCIMB 8712).